We begin with the raw amino-acid sequence, 482 residues long: MFLFVETIRPQQRGESLLETVIKVVPGERFTPYGLALKLGARVVLESSSSKKGRDRYSLLLLQEAFRVAQEGTEVYFVKDGRRSKVKANHRDILDVLMYFARQHSDPGQDFPFPAGGVGYLSFEFCRYCDTIHLNPAKPDPLELPDALFLFGHVFLIYDHYTDLIYLVGLNYKEASIDLEAALAAVEARVNDGDWSALGSVGAPYDAEVLPQDYDPDETYKANVGAMRQEVIAGNLLQGVPSRRLLVKTEMPAIEAYRRLRSSNPSPYMFYLDFGDYQLFRASPELHVKVKGGTAEIRPIAGTRRRGATDAEDRALEAELLADVKERAEHLMLVDLARNDLGRICQPGTVQVKDSYFIERYSHVMHIVSSVEGRLKDDKTGIDALRASFPAGTVSGAPKIRAIEVIDRLEPVQRRFYSGVVGHLSPDGSLDTCIAIRSALKKGDTMVLQAGGGIVFDSNPDRELEETYEKMRATARSLGLEI.

Residues Ser-47 and 267-269 (PYM) contribute to the L-tryptophan site. 302-303 (GT) contacts chorismate. Glu-329 is a Mg(2+) binding site. Residues Tyr-417, Arg-437, 451–453 (GGG), and Gly-453 contribute to the chorismate site. Glu-466 serves as a coordination point for Mg(2+).

This sequence belongs to the anthranilate synthase component I family. Heterotetramer consisting of two non-identical subunits: a beta subunit (TrpG) and a large alpha subunit (TrpE). It depends on Mg(2+) as a cofactor.

The catalysed reaction is chorismate + L-glutamine = anthranilate + pyruvate + L-glutamate + H(+). The protein operates within amino-acid biosynthesis; L-tryptophan biosynthesis; L-tryptophan from chorismate: step 1/5. With respect to regulation, feedback inhibited by tryptophan. Part of a heterotetrameric complex that catalyzes the two-step biosynthesis of anthranilate, an intermediate in the biosynthesis of L-tryptophan. In the first step, the glutamine-binding beta subunit (TrpG) of anthranilate synthase (AS) provides the glutamine amidotransferase activity which generates ammonia as a substrate that, along with chorismate, is used in the second step, catalyzed by the large alpha subunit of AS (TrpE) to produce anthranilate. In the absence of TrpG, TrpE can synthesize anthranilate directly from chorismate and high concentrations of ammonia. The chain is Anthranilate synthase component 1 (trpE) from Spirochaeta aurantia.